A 95-amino-acid chain; its full sequence is Trypomastigote decay-accelerating factor (95 aa).

This sequence belongs to the receptors of complement activation (RCA) family.

Interferes with the efficient assembly of the host C3 convertase. Could protect parasites from complement-mediated lysis by sera from a number of different species. The polypeptide is Trypomastigote decay-accelerating factor (Trypanosoma cruzi).